Here is a 272-residue protein sequence, read N- to C-terminus: NAD kinase (272 aa).

Asp-50 serves as the catalytic Proton acceptor. NAD(+) contacts are provided by residues 50–51, 126–127, Arg-152, Asp-154, 165–170, and Ala-189; these read DG, NE, and TAYNKS.

The protein belongs to the NAD kinase family. A divalent metal cation serves as cofactor.

The protein localises to the cytoplasm. It carries out the reaction NAD(+) + ATP = ADP + NADP(+) + H(+). In terms of biological role, involved in the regulation of the intracellular balance of NAD and NADP, and is a key enzyme in the biosynthesis of NADP. Catalyzes specifically the phosphorylation on 2'-hydroxyl of the adenosine moiety of NAD to yield NADP. This is NAD kinase from Streptococcus pneumoniae (strain Hungary19A-6).